Reading from the N-terminus, the 372-residue chain is Peptide chain release factor 2 (372 aa).

At Gln-253 the chain carries N5-methylglutamine.

Belongs to the prokaryotic/mitochondrial release factor family. Post-translationally, methylated by PrmC. Methylation increases the termination efficiency of RF2.

The protein localises to the cytoplasm. Its function is as follows. Peptide chain release factor 2 directs the termination of translation in response to the peptide chain termination codons UGA and UAA. This chain is Peptide chain release factor 2, found in Nocardia farcinica (strain IFM 10152).